The sequence spans 452 residues: MQRRIMGIETEFGVTCTFHGHRRLSPDEVARYLFRRVVSWGRSSNVFLRNGARLYLDVGSHPEYATAECDSLIQLVTHDRAGERVLEDLLIDAEQRLADEGIGGDIYLFKNNTDSAGNSYGCHENYLIVRAGEFSRISDVLLPFLVTRQLICGAGKVLQTPKAATFCLSQRAEHIWEGVSSATTRSRPIINTRDEPHADAEKYRRLHVIVGDSNMSESTTMLKVGSASLVLEMIEAGVAFRDFSLDNPIRAIREVSHDLTGRRPVRLAGGRQASALDIQREYYARAVEYLQSREPNTQIEQVVDLWGRQLDAVESQDFAKVDTEIDWVIKRKLFQRYQDRYNMELSDPKISQLDLAYHDIKRGRGVFDLLQRKGLAARITTDEEIEAAVNTPPQTTRAKLRGEFISAAQEAGRDFTVDWVHLKLNDQAQRTVLCKDPFRSVDERVKRLIASM.

E9 is a Mg(2+) binding site. R53 lines the ATP pocket. Position 55 (Y55) interacts with Mg(2+). The active-site Proton acceptor is D57. E63 contacts Mg(2+). Positions 66 and 419 each coordinate ATP.

It belongs to the Pup ligase/Pup deamidase family. Pup-conjugating enzyme subfamily.

The catalysed reaction is ATP + [prokaryotic ubiquitin-like protein]-L-glutamate + [protein]-L-lysine = ADP + phosphate + N(6)-([prokaryotic ubiquitin-like protein]-gamma-L-glutamyl)-[protein]-L-lysine.. It participates in protein degradation; proteasomal Pup-dependent pathway. It functions in the pathway protein modification; protein pupylation. In terms of biological role, catalyzes the covalent attachment of the prokaryotic ubiquitin-like protein modifier Pup to the proteasomal substrate proteins, thereby targeting them for proteasomal degradation. This tagging system is termed pupylation. The ligation reaction involves the side-chain carboxylate of the C-terminal glutamate of Pup and the side-chain amino group of a substrate lysine. The chain is Pup--protein ligase from Mycolicibacterium gilvum (strain PYR-GCK) (Mycobacterium gilvum (strain PYR-GCK)).